The primary structure comprises 204 residues: E3 ubiquitin-protein ligase MPSR1 (204 aa).

The RING-type; atypical zinc-finger motif lies at 113-154; it reads CVICLEEWKSEETVKEMPCKHRFHGGCIEKWLGFHGSCPVCR.

Post-translationally, autoubiquitinated.

It localises to the cytoplasm. It carries out the reaction S-ubiquitinyl-[E2 ubiquitin-conjugating enzyme]-L-cysteine + [acceptor protein]-L-lysine = [E2 ubiquitin-conjugating enzyme]-L-cysteine + N(6)-ubiquitinyl-[acceptor protein]-L-lysine.. Its function is as follows. E3 ubiquitin-protein ligase involved in protein quality control (PQC) under proteotoxic stress. Is essential to plant survival under proteotoxic stress. Functions by removing damaged proteins before they form cytotoxic aggregates. Recognizes misfolded proteins selectively and tethers polyubiquitin chains to the proteins directly for subsequent degradation by the 26S proteasome pathway. Targets misfolded proteins independently of cytoplasmic chaperones. Associates with the 26S proteasome and sustains the structural integrity of the proteasome complex at the initial stage of proteotoxic stress. Under normal conditions, MPSR1 becomes highly unstable by its autoubiquitination activity and is stabilized during proteotoxic stress by conjugating ubiquitins on misfolded proteins. This chain is E3 ubiquitin-protein ligase MPSR1, found in Arabidopsis thaliana (Mouse-ear cress).